Consider the following 101-residue polypeptide: Cell division suppressor protein YneA (101 aa).

In terms of domain architecture, LysM spans 35-86 (MTVTVASGDTLWGLAKQYEPAHGLSPDEFIRWVVDVNRLPSSRLTAGEQIVI).

It belongs to the YneA family.

It localises to the cytoplasm. Its function is as follows. Inhibits cell division during the SOS response. Affects a later stage of the cell division protein assembly, after the assembly of the Z ring, by probably suppressing recruitment of FtsL and/or DivIC to the division machinery. In Geobacillus thermodenitrificans (strain NG80-2), this protein is Cell division suppressor protein YneA.